We begin with the raw amino-acid sequence, 170 residues long: Adenine phosphoribosyltransferase (170 aa).

This sequence belongs to the purine/pyrimidine phosphoribosyltransferase family. Homodimer.

It is found in the cytoplasm. It catalyses the reaction AMP + diphosphate = 5-phospho-alpha-D-ribose 1-diphosphate + adenine. Its pathway is purine metabolism; AMP biosynthesis via salvage pathway; AMP from adenine: step 1/1. Catalyzes a salvage reaction resulting in the formation of AMP, that is energically less costly than de novo synthesis. The sequence is that of Adenine phosphoribosyltransferase from Thermosynechococcus vestitus (strain NIES-2133 / IAM M-273 / BP-1).